The sequence spans 321 residues: UDP-3-O-acylglucosamine N-acyltransferase (321 aa).

The active-site Proton acceptor is the histidine 231.

The protein belongs to the transferase hexapeptide repeat family. LpxD subfamily. Homotrimer.

The catalysed reaction is a UDP-3-O-[(3R)-3-hydroxyacyl]-alpha-D-glucosamine + a (3R)-hydroxyacyl-[ACP] = a UDP-2-N,3-O-bis[(3R)-3-hydroxyacyl]-alpha-D-glucosamine + holo-[ACP] + H(+). It functions in the pathway bacterial outer membrane biogenesis; LPS lipid A biosynthesis. In terms of biological role, catalyzes the N-acylation of UDP-3-O-acylglucosamine using 3-hydroxyacyl-ACP as the acyl donor. Is involved in the biosynthesis of lipid A, a phosphorylated glycolipid that anchors the lipopolysaccharide to the outer membrane of the cell. In Campylobacter jejuni subsp. jejuni serotype O:2 (strain ATCC 700819 / NCTC 11168), this protein is UDP-3-O-acylglucosamine N-acyltransferase.